A 201-amino-acid chain; its full sequence is Small ribosomal subunit protein uS4c (201 aa).

An S4 RNA-binding domain is found at 89–149 (MRLDNILFRL…DKPKSGALIK (61 aa)).

Belongs to the universal ribosomal protein uS4 family. In terms of assembly, part of the 30S ribosomal subunit. Contacts protein S5. The interaction surface between S4 and S5 is involved in control of translational fidelity.

The protein localises to the plastid. One of the primary rRNA binding proteins, it binds directly to 16S rRNA where it nucleates assembly of the body of the 30S subunit. In terms of biological role, with S5 and S12 plays an important role in translational accuracy. The chain is Small ribosomal subunit protein uS4c (rps4) from Cuscuta exaltata (Tall dodder).